Here is a 308-residue protein sequence, read N- to C-terminus: 4-hydroxy-3-methylbut-2-enyl diphosphate reductase (308 aa).

Residue Cys13 coordinates [4Fe-4S] cluster. (2E)-4-hydroxy-3-methylbut-2-enyl diphosphate-binding residues include His42 and His75. Residues His42 and His75 each contribute to the dimethylallyl diphosphate site. Positions 42 and 75 each coordinate isopentenyl diphosphate. Cys97 contacts [4Fe-4S] cluster. His125 contributes to the (2E)-4-hydroxy-3-methylbut-2-enyl diphosphate binding site. Residue His125 coordinates dimethylallyl diphosphate. His125 is a binding site for isopentenyl diphosphate. Glu127 functions as the Proton donor in the catalytic mechanism. Residue Thr165 participates in (2E)-4-hydroxy-3-methylbut-2-enyl diphosphate binding. Cys195 is a binding site for [4Fe-4S] cluster. Residues Ser223, Ser224, Asn225, and Ser267 each coordinate (2E)-4-hydroxy-3-methylbut-2-enyl diphosphate. The dimethylallyl diphosphate site is built by Ser223, Ser224, Asn225, and Ser267. Isopentenyl diphosphate is bound by residues Ser223, Ser224, Asn225, and Ser267.

This sequence belongs to the IspH family. It depends on [4Fe-4S] cluster as a cofactor.

It catalyses the reaction isopentenyl diphosphate + 2 oxidized [2Fe-2S]-[ferredoxin] + H2O = (2E)-4-hydroxy-3-methylbut-2-enyl diphosphate + 2 reduced [2Fe-2S]-[ferredoxin] + 2 H(+). The catalysed reaction is dimethylallyl diphosphate + 2 oxidized [2Fe-2S]-[ferredoxin] + H2O = (2E)-4-hydroxy-3-methylbut-2-enyl diphosphate + 2 reduced [2Fe-2S]-[ferredoxin] + 2 H(+). It participates in isoprenoid biosynthesis; dimethylallyl diphosphate biosynthesis; dimethylallyl diphosphate from (2E)-4-hydroxy-3-methylbutenyl diphosphate: step 1/1. The protein operates within isoprenoid biosynthesis; isopentenyl diphosphate biosynthesis via DXP pathway; isopentenyl diphosphate from 1-deoxy-D-xylulose 5-phosphate: step 6/6. Its function is as follows. Catalyzes the conversion of 1-hydroxy-2-methyl-2-(E)-butenyl 4-diphosphate (HMBPP) into a mixture of isopentenyl diphosphate (IPP) and dimethylallyl diphosphate (DMAPP). Acts in the terminal step of the DOXP/MEP pathway for isoprenoid precursor biosynthesis. The protein is 4-hydroxy-3-methylbut-2-enyl diphosphate reductase of Chlamydia muridarum (strain MoPn / Nigg).